Here is a 173-residue protein sequence, read N- to C-terminus: Cell division protein SepF (173 aa).

Residues 17-85 (SDDEYISDET…NELRTITTVH (69 aa)) form a disordered region. Low complexity predominate over residues 35–52 (SAGGSSAAVSESGSTSVA).

Belongs to the SepF family. Homodimer. Interacts with FtsZ.

The protein localises to the cytoplasm. Its function is as follows. Cell division protein that is part of the divisome complex and is recruited early to the Z-ring. Probably stimulates Z-ring formation, perhaps through the cross-linking of FtsZ protofilaments. Its function overlaps with FtsA. The polypeptide is Cell division protein SepF (Kocuria rhizophila (strain ATCC 9341 / DSM 348 / NBRC 103217 / DC2201)).